The sequence spans 497 residues: Reticulophagy regulator 1 (497 aa).

The segment at 1–51 (MASPAPPEHAEEGCPAPAAEEQAPPSPPPPQASPAERQQQEEEAQEAGAAE) is disordered. The Cytoplasmic segment spans residues 1–59 (MASPAPPEHAEEGCPAPAAEEQAPPSPPPPQASPAERQQQEEEAQEAGAAEGAGLQVEE). The segment covering 13–23 (GCPAPAAEEQA) has biased composition (low complexity). A helical transmembrane segment spans residues 60–80 (AAGRAAAAVTWLLGEPVLWLG). The Lumenal segment spans residues 81–95 (CRADELLSWKRPLRS). Residues 84–233 (DELLSWKRPL…LLCAFLCPLF (150 aa)) form a reticulon homology domain region. The chain crosses the membrane as a helical span at residues 96 to 116 (LLGFVAANLLFWFLALTPWRV). Topologically, residues 117–118 (YH) are cytoplasmic. Residues 119-139 (LISVMILGRVIMQIIKDMVLS) form a helical membrane-spanning segment. The Lumenal segment spans residues 140-208 (RTRGAQLWRS…LVCSVCTFFT (69 aa)). Ser149 is subject to Phosphoserine. Ser151 carries the post-translational modification Phosphoserine; by CAMK2B. At Ser153 the chain carries Phosphoserine. The chain crosses the membrane as a helical span at residues 209 to 229 (ILGSYIPGVILSYLLLLCAFL). Topologically, residues 230–497 (CPLFKCNDIG…GFLSNLLGGH (268 aa)) are cytoplasmic. Polar residues predominate over residues 319–330 (FNLSEGYTPQTD). Disordered stretches follow at residues 319–365 (FNLS…EDEL), 377–396 (KEQL…AAGL), 436–455 (LSQA…GDDF), and 468–497 (SELG…LGGH). Basic and acidic residues-rich tracts occupy residues 334-348 (DLDR…RDLS) and 377-388 (KEQLDSGHRPSK). Over residues 443–455 (PEEDTDTEEGDDF) the composition is skewed to acidic residues. An LIR motif motif is present at residues 453 to 458 (DDFELL). The segment covering 471 to 490 (GLTQDQEAEAQQNKKSSGFL) has biased composition (polar residues).

This sequence belongs to the RETREG family. In terms of assembly, homooligomer; oligomerization is enhanced following endoplasmic reticulum stress and is mediated by the reticulon homology domain. Interacts with ATG8 family modifier proteins MAP1LC3A, MAP1LC3B, MAP1LC3C, GABARAP, GABARAPL1 and GABARAPL2. Shows higher affinity for GABARAPL1 than for MAP1LC3A or MAP1LC3B. Post-translationally, phosphorylation at Ser-151 by CAMK2B enhances oligomerization and membrane scission and reticulophagy activity. In terms of tissue distribution, overexpressed in esophageal squamous cell carcinoma.

The protein localises to the golgi apparatus. It localises to the cis-Golgi network membrane. It is found in the endoplasmic reticulum membrane. Its function is as follows. Endoplasmic reticulum (ER)-anchored autophagy regulator which mediates ER delivery into lysosomes through sequestration into autophagosomes. Promotes membrane remodeling and ER scission via its membrane bending capacity and targets the fragments into autophagosomes via interaction with ATG8 family proteins. Active under basal conditions. Required for collagen quality control in a LIR motif-dependent manner. Required for long-term survival of nociceptive and autonomic ganglion neurons. In terms of biological role, (Microbial infection) During SARS-CoV-2 infection, RETREG1-mediated reticulophagy is promoted by SARS-CoV-2 ORF3A protein. This induces endoplasmic reticulum stress and inflammatory responses and facilitates viral infection. In Homo sapiens (Human), this protein is Reticulophagy regulator 1.